We begin with the raw amino-acid sequence, 286 residues long: uncharacterized protein (286 aa).

Residues 152 to 182 (YPSTTTSVTPGKKGEKTTKVDGFSSPLNQDT) are disordered. The chain crosses the membrane as a helical span at residues 198 to 218 (VLIAVTLFVSGIAITVFVIFE). The segment at 239–278 (RRPRKEDQQPGTAESQSDTQPKKVGQEAPNSSSPKKAVEI) is disordered. The segment covering 247–257 (QPGTAESQSDT) has biased composition (polar residues).

It is found in the membrane. This is an uncharacterized protein from Bos taurus (Bovine).